The primary structure comprises 331 residues: Phenylalanine--tRNA ligase alpha subunit (331 aa).

Glu252 contributes to the Mg(2+) binding site.

Belongs to the class-II aminoacyl-tRNA synthetase family. Phe-tRNA synthetase alpha subunit type 1 subfamily. Tetramer of two alpha and two beta subunits. It depends on Mg(2+) as a cofactor.

The protein resides in the cytoplasm. It carries out the reaction tRNA(Phe) + L-phenylalanine + ATP = L-phenylalanyl-tRNA(Phe) + AMP + diphosphate + H(+). The sequence is that of Phenylalanine--tRNA ligase alpha subunit from Xanthomonas axonopodis pv. citri (strain 306).